The sequence spans 521 residues: DEAD-box ATP-dependent RNA helicase 12 (521 aa).

Residues 1 to 97 (MHHPRARYPP…QQWLRRDQAT (97 aa)) form a disordered region. Residues 13–50 (TSGGGGGGGGGGGGGRGNGGGGFGGGGGGGGGNHGYYG) are compositionally biased toward gly residues. Positions 51–89 (RGPQPQPQQQHYHHQAQQLHQHQQQQQHAQRNSSSQQQQ) are enriched in low complexity. The short motif at 147-175 (NEFEDYFLKRELLMGIYEKGFERPSPIQE) is the Q motif element. Positions 178-348 (IPIALTGSDI…EKYLPRPYVI (171 aa)) constitute a Helicase ATP-binding domain. An ATP-binding site is contributed by 191–198 (AKNGTGKT). A DEAD box motif is present at residues 296–299 (DEAD). A Helicase C-terminal domain is found at 358–518 (GITQYYAFVE…TIPPQIDLAV (161 aa)).

It belongs to the DEAD box helicase family. DDX6/DHH1 subfamily.

The protein localises to the cytoplasm. It localises to the P-body. It catalyses the reaction ATP + H2O = ADP + phosphate + H(+). Functionally, ATP-dependent RNA helicase involved in mRNA turnover, and more specifically in mRNA decapping. This Oryza sativa subsp. japonica (Rice) protein is DEAD-box ATP-dependent RNA helicase 12.